Here is a 578-residue protein sequence, read N- to C-terminus: NADPH oxidase 4 (578 aa).

The Cytoplasmic portion of the chain corresponds to 1 to 16 (MALSWRSWLANEGVKH). Residues 17–37 (LCLLVWLSLNVLLFWKTFLLY) traverse the membrane as a helical segment. Residues 38-62 (NQGPEYYYIHQMLGLGLCLSRASAS) lie on the Extracellular side of the membrane. The region spanning 58 to 303 (RASASVLNLN…YCAERLYRCI (246 aa)) is the Ferric oxidoreductase domain. The chain crosses the membrane as a helical span at residues 63-83 (VLNLNCSLILLPMCRTVLAYL). The Cytoplasmic portion of the chain corresponds to 84–104 (RGSQKVPSRRTRRLLDKSKTL). A helical membrane pass occupies residues 105-125 (HITCGITICIFSGVHVAAHLV). At 126 to 154 (NALNFSVNYSEHFLALNAARYQNEDPRKL) the chain is on the extracellular side. A glycan (N-linked (GlcNAc...) asparagine) is linked at N133. The chain crosses the membrane as a helical span at residues 155 to 175 (LFTTVPGLTGVCMVVVLFLMV). At 176–188 (TASTYAIRVSNYD) the chain is on the cytoplasmic side. The chain crosses the membrane as a helical span at residues 189–209 (IFWYTHNLFFVFYMLLLLHVS). Topologically, residues 210–424 (GGLLKYQTNL…SPFEESLNYE (215 aa)) are extracellular. The interval 218–273 (NLDTHPPGCISLNRTPSQNMSIADYVSEHFHGSLPGGFSKLEDHYQKTLVKICLEE) is E-loop; essential for H2O2 generating catalytic activity. The interval 248-575 (HGSLPGGFSK…YGTKFEYNKE (328 aa)) is mediates interaction with TLR4. Residues 304–419 (RSNKPVTIIS…DGPFGSPFEE (116 aa)) form the FAD-binding FR-type domain. The chain crosses the membrane as a helical span at residues 425–445 (VSLCVAGGIGVTPFASILNTL). Residues 446-578 (LDDWKPYKLR…KFEYNKESFS (133 aa)) are Cytoplasmic-facing.

In terms of assembly, interacts with TLR4. Interacts with, relocalizes and stabilizes CYBA/p22phox. Interacts with protein disulfide isomerase. Interacts with PPP1R15A. Interacts with LRRC8A; this interaction prevents the ubiquitin-mediated degradation of LRRC8A. Heme is required as a cofactor. N-glycosylation is required for the function. Expressed in vascular smooth muscle.

The protein localises to the cytoplasm. The protein resides in the endoplasmic reticulum membrane. It localises to the cell membrane. It is found in the cell junction. Its subcellular location is the focal adhesion. The protein localises to the nucleus. It carries out the reaction NADPH + 2 O2 = 2 superoxide + NADP(+) + H(+). It catalyses the reaction NADPH + O2 + H(+) = H2O2 + NADP(+). Its activity is regulated as follows. Activated by insulin. Inhibited by diphenylene iodonium. Inhibited by plumbagin. Activated by phorbol 12-myristate 13-acetate (PMA). Functionally, NADPH oxidase that catalyzes predominantly the reduction of oxygen to H2O2. Can also catalyze to a smaller extent, the reduction of oxygen to superoxide. May function as an oxygen sensor regulating the KCNK3/TASK-1 potassium channel and HIF1A activity. May regulate insulin signaling cascade. May play a role in apoptosis, bone resorption and lipolysaccharide-mediated activation of NFKB. May produce superoxide in the nucleus and play a role in regulating gene expression upon cell stimulation. Promotes ferroptosis, reactive oxygen species production and reduced glutathione (GSH) levels by activating NLRP3 inflammasome activation and cytokine release. This is NADPH oxidase 4 (Nox4) from Rattus norvegicus (Rat).